The primary structure comprises 306 residues: Homoserine kinase (306 aa).

Residue 84 to 94 (PAGLGLGSSGA) participates in ATP binding.

Belongs to the GHMP kinase family. Homoserine kinase subfamily.

The protein localises to the cytoplasm. It catalyses the reaction L-homoserine + ATP = O-phospho-L-homoserine + ADP + H(+). It functions in the pathway amino-acid biosynthesis; L-threonine biosynthesis; L-threonine from L-aspartate: step 4/5. Functionally, catalyzes the ATP-dependent phosphorylation of L-homoserine to L-homoserine phosphate. In Sulfurisphaera tokodaii (strain DSM 16993 / JCM 10545 / NBRC 100140 / 7) (Sulfolobus tokodaii), this protein is Homoserine kinase.